Reading from the N-terminus, the 113-residue chain is Retrotransposon Gag-like protein 8 (113 aa).

Belongs to the FAM127 family.

The protein is Retrotransposon Gag-like protein 8 (RTL8A) of Bos taurus (Bovine).